Consider the following 199-residue polypeptide: MIAVIDVSGNNLTSLTNALIRLGGHFALTHDAEEIQKASHVILPGVGTARSGMTALQQNGLIDVLRTLTQPLLGICLGMQLLLEYSEEDDIPCLGLIPGVAELLKAERNHPVPHMGWNNLHWQKTSSLQQGLNNSDYVYFVHSYALKADNYALARCQYHEEFTAVVKKGNFYGMQFHPEKSANVGMVLLNNFLSLESTC.

The Glutamine amidotransferase type-1 domain maps to 1–199 (MIAVIDVSGN…NNFLSLESTC (199 aa)). The active-site Nucleophile is the Cys-76. Catalysis depends on residues His-177 and Glu-179.

Heterodimer of HisH and HisF.

The protein localises to the cytoplasm. It carries out the reaction 5-[(5-phospho-1-deoxy-D-ribulos-1-ylimino)methylamino]-1-(5-phospho-beta-D-ribosyl)imidazole-4-carboxamide + L-glutamine = D-erythro-1-(imidazol-4-yl)glycerol 3-phosphate + 5-amino-1-(5-phospho-beta-D-ribosyl)imidazole-4-carboxamide + L-glutamate + H(+). The enzyme catalyses L-glutamine + H2O = L-glutamate + NH4(+). Its pathway is amino-acid biosynthesis; L-histidine biosynthesis; L-histidine from 5-phospho-alpha-D-ribose 1-diphosphate: step 5/9. IGPS catalyzes the conversion of PRFAR and glutamine to IGP, AICAR and glutamate. The HisH subunit provides the glutamine amidotransferase activity that produces the ammonia necessary to HisF for the synthesis of IGP and AICAR. This is Imidazole glycerol phosphate synthase subunit HisH 2 from Legionella pneumophila subsp. pneumophila (strain Philadelphia 1 / ATCC 33152 / DSM 7513).